Consider the following 261-residue polypeptide: Aquaporin-8 (261 aa).

Topologically, residues 1 to 36 are cytoplasmic; sequence MSGEQTPMCSMDLPEVKVKTSMAGRCRVFWYEQYVQ. Residues 37 to 57 form a helical membrane-spanning segment; sequence PCIVELVGSALFIFIGCLSVI. At Cys-53 the chain carries Cysteine persulfide. Position 53 is a cysteine sulfenic acid (-SOH) (Cys-53). The Extracellular portion of the chain corresponds to 58–84; sequence ENSPNTGLLQPALAHGLALGLIIATLG. Residues 85–105 traverse the membrane as a helical segment; the sequence is NISGGHFNPAVSLAVTVIGGL. The short motif at 92–94 is the NPA 1 element; it reads NPA. Over 106-107 the chain is Cytoplasmic; it reads KT. Residues 108–128 form a helical membrane-spanning segment; that stretch reads MLLIPYWISQLFGGLIGAALA. The Extracellular segment spans residues 129–156; the sequence is KVVSPEERFWNASGAAFAIVQEQEQVAE. Asn-139 carries N-linked (GlcNAc...) asparagine glycosylation. A helical membrane pass occupies residues 157 to 177; it reads ALGIEIILTMLLVLAVCMGAV. At 178 to 183 the chain is on the cytoplasmic side; sequence NEKTMG. Residues 184–204 form a helical membrane-spanning segment; sequence PLAPFSIGFSVIVDILAGGSI. The Extracellular segment spans residues 205–228; that stretch reads SGACMNPARAFGPAVMAGYWDFHW. The short motif at 210–212 is the NPA 2 element; the sequence is NPA. The helical transmembrane segment at 229 to 249 threads the bilayer; that stretch reads IYWLGPLLAGLFVGLLIRLLI. The Cytoplasmic portion of the chain corresponds to 250–261; it reads GDEKTRLILKSR.

Belongs to the MIP/aquaporin (TC 1.A.8) family. Post-translationally, sulfenylation at Cys-53(C53-SOH) when hydrogen peroxide flows through the AQP8 channel, making it susceptible to hydrogen sulfide produced by CBS. Persulfidation at Cys-53 is required to gate AQP8 channel; under stress condition, hydrogen peroxide accumulates in the cell leading to CBS activation that produces hydrogen sulfide inducing persulfidation of oxidized Cys-53 (C53-SOH). In terms of processing, N-glycosylated. In terms of tissue distribution, expressed in placenta. Highly expressed in the epithelial layer of gall-bladders. Expressed in heart, kidney, submandibular gland, liver, small intestine, colon, testes, and epididymis. In testes, expressed in spermatogenic cells.

Its subcellular location is the cell membrane. It localises to the mitochondrion inner membrane. The protein localises to the apical cell membrane. It is found in the basolateral cell membrane. The protein resides in the smooth endoplasmic reticulum membrane. The enzyme catalyses H2O(in) = H2O(out). The catalysed reaction is urea(in) = urea(out). It carries out the reaction NH4(+)(in) = NH4(+)(out). It catalyses the reaction H2O2(out) = H2O2(in). The enzyme catalyses formamide(out) = formamide(in). The catalysed reaction is methylamine(out) = methylamine(in). Its activity is regulated as follows. Reversibly gated by a two-step sulfenylation-persulfidation process in cells undergoing diverse stresses. Its function is as follows. Channel that allows the facilitated permeation of water and uncharged molecules, such as hydrogen peroxide and the neutral form of ammonia (NH3), through cellular membranes such as plasma membrane, inner mitochondrial membrane and endoplasmic reticulum membrane of several tissues. The transport of ammonia neutral form induces a parallel transport of proton, at alkaline pH when the concentration of ammonia is high. However, it is unclear whether the transport of proton takes place via the aquaporin or via an endogenous pathway. Also, may transport ammonia analogs such as formamide and methylamine, a transport favourited at basic pH due to the increase of unprotonated (neutral) form, which is expected to favor diffusion. In vitro, may be also permeable to urea but not to glycerol. Does not transport urea or glycerol. The water transport mechanism is mercury- and copper-sensitive and passive in response to osmotic driving forces. At the canicular plasma membrane, mediates the osmotic transport of water toward the bile canaliculus and facilitates the cAMP-induced bile canalicular water secretion, a process involved in bile formation. In addition, mediates the hydrogen peroxide release from hepatocyte mitochondria that modulates the SREBF2-mediated cholesterol synthesis and facilitates the mitochondrial ammonia uptake which is metabolized into urea, mainly under glucagon stimulation. In B cells, transports the CYBB-generated hydrogen peroxide from the external leaflet of the plasma membrane to the cytosol to promote B cell activation and differentiation for signal amplification. In the small intestine and colon system, mediates water transport through mitochondria and apical membrane of epithelial cells. May play an important role in the adaptive response of proximal tubule cells to acidosis possibly facilitating mitochondrial ammonia transport. The sequence is that of Aquaporin-8 from Mus musculus (Mouse).